The chain runs to 929 residues: Isoleucine--tRNA ligase (929 aa).

Positions 58 to 68 (PYANGDIHIGH) match the 'HIGH' region motif. L-isoleucyl-5'-AMP is bound at residue glutamate 563. Positions 605 to 609 (KMSKS) match the 'KMSKS' region motif. Lysine 608 lines the ATP pocket. Residues cysteine 892, cysteine 895, cysteine 912, and cysteine 915 each coordinate Zn(2+).

It belongs to the class-I aminoacyl-tRNA synthetase family. IleS type 1 subfamily. As to quaternary structure, monomer. Zn(2+) is required as a cofactor.

Its subcellular location is the cytoplasm. It carries out the reaction tRNA(Ile) + L-isoleucine + ATP = L-isoleucyl-tRNA(Ile) + AMP + diphosphate. In terms of biological role, catalyzes the attachment of isoleucine to tRNA(Ile). As IleRS can inadvertently accommodate and process structurally similar amino acids such as valine, to avoid such errors it has two additional distinct tRNA(Ile)-dependent editing activities. One activity is designated as 'pretransfer' editing and involves the hydrolysis of activated Val-AMP. The other activity is designated 'posttransfer' editing and involves deacylation of mischarged Val-tRNA(Ile). This Neisseria meningitidis serogroup B (strain ATCC BAA-335 / MC58) protein is Isoleucine--tRNA ligase.